Here is a 404-residue protein sequence, read N- to C-terminus: Aspergillopepsin-1 (404 aa).

Residues 1 to 20 (MVILSKVAAVAVGLSTVASA) form the signal peptide. Positions 21–77 (LPTGPSHSPHARRGFTINQITRQTARVGPKTASFPAIYSRALAKYGGTVPAHLKSAV) are cleaved as a propeptide — activation peptide. The Peptidase A1 domain maps to 95–401 (YLTPVNIGGT…DSQGPRLGFA (307 aa)). Aspartate 111 is an active-site residue. Asparagine 140 carries N-linked (GlcNAc...) asparagine glycosylation. Aspartate 293 is a catalytic residue. A disulfide bridge links cysteine 329 with cysteine 364.

It belongs to the peptidase A1 family. As to quaternary structure, monomer.

Its subcellular location is the secreted. It carries out the reaction Hydrolysis of proteins with broad specificity. Generally favors hydrophobic residues in P1 and P1', but also accepts Lys in P1, which leads to activation of trypsinogen. Does not clot milk.. Its function is as follows. Secreted aspartic endopeptidase that allows assimilation of proteinaceous substrates. The scissile peptide bond is attacked by a nucleophilic water molecule activated by two aspartic residues in the active site. Shows a broad primary substrate specificity. Favors hydrophobic residues at the P1 and P1' positions, but also accepts a lysine residue in the P1 position, leading to the activation of trypsinogen and chymotrypsinogen A. In Aspergillus flavus (strain ATCC 200026 / FGSC A1120 / IAM 13836 / NRRL 3357 / JCM 12722 / SRRC 167), this protein is Aspergillopepsin-1 (pepA).